Here is a 137-residue protein sequence, read N- to C-terminus: Ribosome-binding factor A (137 aa).

Belongs to the RbfA family. Monomer. Binds 30S ribosomal subunits, but not 50S ribosomal subunits or 70S ribosomes.

It is found in the cytoplasm. One of several proteins that assist in the late maturation steps of the functional core of the 30S ribosomal subunit. Associates with free 30S ribosomal subunits (but not with 30S subunits that are part of 70S ribosomes or polysomes). Required for efficient processing of 16S rRNA. May interact with the 5'-terminal helix region of 16S rRNA. This Rhodopseudomonas palustris (strain TIE-1) protein is Ribosome-binding factor A.